The primary structure comprises 146 residues: Anti-sigma F factor (146 aa).

Belongs to the anti-sigma-factor family.

It catalyses the reaction L-seryl-[protein] + ATP = O-phospho-L-seryl-[protein] + ADP + H(+). The catalysed reaction is L-threonyl-[protein] + ATP = O-phospho-L-threonyl-[protein] + ADP + H(+). Functionally, binds to sigma F and blocks its ability to form an RNA polymerase holoenzyme (E-sigma F). Phosphorylates SpoIIAA on a serine residue. This phosphorylation may enable SpoIIAA to act as an anti-anti-sigma factor that counteracts SpoIIAB and thus releases sigma F from inhibition. The chain is Anti-sigma F factor from Anoxybacillus flavithermus (strain DSM 21510 / WK1).